The primary structure comprises 617 residues: DNA double-strand break repair protein Mre11 (617 aa).

The Mn(2+) site is built by aspartate 12, histidine 14, aspartate 53, and asparagine 88. Histidine 89 serves as the catalytic Proton donor. Positions 158, 189, and 191 each coordinate Mn(2+). Low complexity predominate over residues 395 to 432 (SPVDPSSSVSSIESSGSVSPIDSVSTVSPSSPSSSAII). Disordered regions lie at residues 395 to 437 (SPVD…EPEE) and 513 to 617 (VEDE…GDYL). Residues 529–547 (APQSSSPVSFSDNSQTGFS) show a composition bias toward polar residues. Low complexity predominate over residues 549–559 (ISPPESIPSPE). Residues 560–583 (ILKENSEADADEKPVDGKLSEEKP) show a composition bias toward basic and acidic residues.

Belongs to the MRE11/RAD32 family. Homodimer. Forms a heterotetramer composed of two Mre11 subunits and two Rad50 subunits. Mn(2+) serves as cofactor.

With respect to regulation, nuclease activity is regulated by Rad50. Part of the Rad50/Mre11 complex, which is involved in the early steps of DNA double-strand break (DSB) repair. The complex may facilitate opening of the processed DNA ends to aid in the recruitment of HerA and NurA. Mre11 binds to DSB ends and has both double-stranded 3'-5' exonuclease activity and single-stranded endonuclease activity. The polypeptide is DNA double-strand break repair protein Mre11 (Methanosarcina mazei (strain ATCC BAA-159 / DSM 3647 / Goe1 / Go1 / JCM 11833 / OCM 88) (Methanosarcina frisia)).